A 91-amino-acid polypeptide reads, in one-letter code: uncharacterized protein (91 aa).

Transmembrane regions (helical) follow at residues 5–27 (FFKYSVLLLPALINLAAFLTNFQ) and 47–69 (DFYHLTGNIVVYIVSAFLSFIFF).

The protein resides in the cell membrane. This is an uncharacterized protein from Archaeoglobus fulgidus (strain ATCC 49558 / DSM 4304 / JCM 9628 / NBRC 100126 / VC-16).